The sequence spans 297 residues: N-acetylmuramic acid 6-phosphate etherase (297 aa).

The region spanning 55 to 218 (AAAALKSGGR…STGAMVKFGK (164 aa)) is the SIS domain. The Proton donor role is filled by Glu-83. The active site involves Glu-114.

This sequence belongs to the GCKR-like family. MurNAc-6-P etherase subfamily. As to quaternary structure, homodimer.

The catalysed reaction is N-acetyl-D-muramate 6-phosphate + H2O = N-acetyl-D-glucosamine 6-phosphate + (R)-lactate. Its pathway is amino-sugar metabolism; 1,6-anhydro-N-acetylmuramate degradation. It participates in amino-sugar metabolism; N-acetylmuramate degradation. It functions in the pathway cell wall biogenesis; peptidoglycan recycling. Its function is as follows. Specifically catalyzes the cleavage of the D-lactyl ether substituent of MurNAc 6-phosphate, producing GlcNAc 6-phosphate and D-lactate. Together with AnmK, is also required for the utilization of anhydro-N-acetylmuramic acid (anhMurNAc) either imported from the medium or derived from its own cell wall murein, and thus plays a role in cell wall recycling. This chain is N-acetylmuramic acid 6-phosphate etherase, found in Salmonella paratyphi B (strain ATCC BAA-1250 / SPB7).